The sequence spans 240 residues: Ubiquinone biosynthesis O-methyltransferase (240 aa).

S-adenosyl-L-methionine-binding residues include R44, G64, D85, and M129.

Belongs to the methyltransferase superfamily. UbiG/COQ3 family.

It carries out the reaction a 3-demethylubiquinol + S-adenosyl-L-methionine = a ubiquinol + S-adenosyl-L-homocysteine + H(+). It catalyses the reaction a 3-(all-trans-polyprenyl)benzene-1,2-diol + S-adenosyl-L-methionine = a 2-methoxy-6-(all-trans-polyprenyl)phenol + S-adenosyl-L-homocysteine + H(+). It functions in the pathway cofactor biosynthesis; ubiquinone biosynthesis. Functionally, O-methyltransferase that catalyzes the 2 O-methylation steps in the ubiquinone biosynthetic pathway. This chain is Ubiquinone biosynthesis O-methyltransferase, found in Escherichia coli (strain SMS-3-5 / SECEC).